A 314-amino-acid polypeptide reads, in one-letter code: Secreted frizzled-related protein 5 (314 aa).

The first 21 residues, 1-21 (MWVAWSARTAALALLLGALHG), serve as a signal peptide directing secretion. The FZ domain occupies 45 to 162 (SKPPQCLDIP…PLDNDLCIAV (118 aa)). 8 disulfide bridges follow: Cys50–Cys113, Cys60–Cys106, Cys97–Cys132, Cys121–Cys159, Cys125–Cys149, Cys178–Cys250, Cys181–Cys252, and Cys195–Cys300. The NTR domain occupies 178–300 (CAQCEMEHSA…AVKFMFSYPC (123 aa)).

The protein belongs to the secreted frizzled-related protein (sFRP) family.

Its subcellular location is the secreted. Its function is as follows. Soluble frizzled-related proteins (sFRPS) function as modulators of Wnt signaling through direct interaction with Wnts. They have a role in regulating cell growth and differentiation in specific cell types. SFRP5 may be involved in determining the polarity of photoreceptor, and perhaps, other cells in the retina. This chain is Secreted frizzled-related protein 5 (Sfrp5), found in Mus musculus (Mouse).